Consider the following 365-residue polypeptide: Phosphoserine aminotransferase (365 aa).

Position 40 (arginine 40) interacts with L-glutamate. Pyridoxal 5'-phosphate is bound by residues alanine 74 to serine 75, phenylalanine 99, threonine 155, aspartate 177, and glutamine 200. N6-(pyridoxal phosphate)lysine is present on lysine 201. Asparagine 241 to threonine 242 is a pyridoxal 5'-phosphate binding site.

Belongs to the class-V pyridoxal-phosphate-dependent aminotransferase family. SerC subfamily. As to quaternary structure, homodimer. Requires pyridoxal 5'-phosphate as cofactor.

It is found in the cytoplasm. The enzyme catalyses O-phospho-L-serine + 2-oxoglutarate = 3-phosphooxypyruvate + L-glutamate. It catalyses the reaction 4-(phosphooxy)-L-threonine + 2-oxoglutarate = (R)-3-hydroxy-2-oxo-4-phosphooxybutanoate + L-glutamate. It functions in the pathway amino-acid biosynthesis; L-serine biosynthesis; L-serine from 3-phospho-D-glycerate: step 2/3. Catalyzes the reversible conversion of 3-phosphohydroxypyruvate to phosphoserine and of 3-hydroxy-2-oxo-4-phosphonooxybutanoate to phosphohydroxythreonine. In Lactococcus lactis subsp. lactis (strain IL1403) (Streptococcus lactis), this protein is Phosphoserine aminotransferase.